Reading from the N-terminus, the 464-residue chain is Argininosuccinate lyase (464 aa).

This sequence belongs to the lyase 1 family. Argininosuccinate lyase subfamily.

Its subcellular location is the cytoplasm. The enzyme catalyses 2-(N(omega)-L-arginino)succinate = fumarate + L-arginine. It functions in the pathway amino-acid biosynthesis; L-arginine biosynthesis; L-arginine from L-ornithine and carbamoyl phosphate: step 3/3. The sequence is that of Argininosuccinate lyase from Frankia casuarinae (strain DSM 45818 / CECT 9043 / HFP020203 / CcI3).